A 163-amino-acid chain; its full sequence is Transcription elongation factor GreA (163 aa).

The stretch at 11–38 (FKQLEKELDRLKKERPGVIQAIKEAREE) forms a coiled coil.

Belongs to the GreA/GreB family.

Its function is as follows. Necessary for efficient RNA polymerase transcription elongation past template-encoded arresting sites. The arresting sites in DNA have the property of trapping a certain fraction of elongating RNA polymerases that pass through, resulting in locked ternary complexes. Cleavage of the nascent transcript by cleavage factors such as GreA or GreB allows the resumption of elongation from the new 3'terminus. GreA releases sequences of 2 to 3 nucleotides. This chain is Transcription elongation factor GreA, found in Nitratidesulfovibrio vulgaris (strain ATCC 29579 / DSM 644 / CCUG 34227 / NCIMB 8303 / VKM B-1760 / Hildenborough) (Desulfovibrio vulgaris).